We begin with the raw amino-acid sequence, 159 residues long: Na(+)/H(+) antiporter subunit E1 (159 aa).

Helical transmembrane passes span 1–21 (MAIQ…LSGS), 27–47 (LLLG…ILPG), 49–69 (FYFI…VELL), and 101–121 (WQIV…VLGI).

Belongs to the CPA3 antiporters (TC 2.A.63) subunit E family. In terms of assembly, may form a heterooligomeric complex that consists of seven subunits: mnhA1, mnhB1, mnhC1, mnhD1, mnhE1, mnhF1 and mnhG1.

It is found in the cell membrane. Its function is as follows. Mnh complex is a Na(+)/H(+) antiporter involved in Na(+) excretion. The sequence is that of Na(+)/H(+) antiporter subunit E1 (mnhE1) from Staphylococcus haemolyticus (strain JCSC1435).